Consider the following 60-residue polypeptide: Large ribosomal subunit protein uL30 (60 aa).

The protein belongs to the universal ribosomal protein uL30 family. Part of the 50S ribosomal subunit.

This chain is Large ribosomal subunit protein uL30, found in Leptothrix cholodnii (strain ATCC 51168 / LMG 8142 / SP-6) (Leptothrix discophora (strain SP-6)).